We begin with the raw amino-acid sequence, 240 residues long: Endo-chitosanase B (240 aa).

The signal sequence occupies residues 1–17 (MRLSEILAVALVTGATA). Residue Asn-86 is glycosylated (N-linked (GlcNAc...) asparagine).

It belongs to the glycosyl hydrolase 75 family.

Its subcellular location is the secreted. It carries out the reaction Endohydrolysis of beta-(1-&gt;4)-linkages between D-glucosamine residues in a partly acetylated chitosan.. Its function is as follows. Chitosanase catalyzing the endo-type cleavage of chitosan, the deacylated form of chitin. Chitosanase may be crucial in the degradation of the deacetylated portion of chitin in the fungal cell wall. Chitoolisaccharides produced by the hydrolysis of partially N-acetylated chitosan are known to have many biological activities, including antibacterial activity, immune-enhancing effects, and elicitor activity. The sequence is that of Endo-chitosanase B (csnB) from Aspergillus oryzae (Yellow koji mold).